We begin with the raw amino-acid sequence, 362 residues long: Ferrochelatase (362 aa).

The Fe cation site is built by His228 and Glu309.

Belongs to the ferrochelatase family.

The protein localises to the cytoplasm. The enzyme catalyses heme b + 2 H(+) = protoporphyrin IX + Fe(2+). Its pathway is porphyrin-containing compound metabolism; protoheme biosynthesis; protoheme from protoporphyrin-IX: step 1/1. Catalyzes the ferrous insertion into protoporphyrin IX. In Bordetella parapertussis (strain 12822 / ATCC BAA-587 / NCTC 13253), this protein is Ferrochelatase.